A 230-amino-acid polypeptide reads, in one-letter code: Small ribosomal subunit protein uS3 (230 aa).

A KH type-2 domain is found at Val-39–Arg-107. Residues Ser-210–Asn-230 form a disordered region.

It belongs to the universal ribosomal protein uS3 family. In terms of assembly, part of the 30S ribosomal subunit. Forms a tight complex with proteins S10 and S14.

Binds the lower part of the 30S subunit head. Binds mRNA in the 70S ribosome, positioning it for translation. The sequence is that of Small ribosomal subunit protein uS3 from Neisseria meningitidis serogroup C (strain 053442).